The primary structure comprises 394 residues: Phosphatidylinositol 4-phosphate 5-kinase-like protein 1 (394 aa).

A PIPK domain is found at 36 to 393 (DKQSRLGLFE…RLCQWVEAHT (358 aa)).

In terms of assembly, heterodimerizes with other type I phosphatidylinositol 4-phosphate 5-kinase.

Its subcellular location is the cytoplasm. It localises to the membrane. The catalysed reaction is a 1,2-diacyl-sn-glycero-3-phospho-(1D-myo-inositol 4-phosphate) + ATP = a 1,2-diacyl-sn-glycero-3-phospho-(1D-myo-inositol-4,5-bisphosphate) + ADP + H(+). Its function is as follows. May act as a scaffold to localize and regulate type I PI(4)P 5-kinases to specific compartments within the cell, where they generate PI(4,5)P2 for actin nucleation, signaling and scaffold protein recruitment and conversion to PI(3,4,5)P3. The polypeptide is Phosphatidylinositol 4-phosphate 5-kinase-like protein 1 (PIP5KL1) (Homo sapiens (Human)).